We begin with the raw amino-acid sequence, 912 residues long: Tubulin polyglutamylase TTLL7 (912 aa).

One can recognise a TTL domain in the interval 38–390 (KGIITANVAG…RTSDKRKNLA (353 aa)). ATP contacts are provided by residues lysine 160, 166-167 (MG), 188-191 (QEYI), and 201-203 (KFD). Arginine 227 lines the L-glutamate pocket. 249–250 (TN) contacts ATP. L-glutamate-binding residues include tyrosine 251, serine 252, and lysine 271. Residues aspartate 336, glutamate 349, and asparagine 351 each coordinate Mg(2+). Position 367 (lysine 367) interacts with L-glutamate. Residues 388–450 (NLAKQKAEAQ…VSQEEHENRH (63 aa)) form a c-MTBD region region. Disordered stretches follow at residues 547–570 (YGSSDSSYDSSSSSSNSELDENEK) and 658–688 (PTSASRSHSLNRASSYARHLPHGSDTGSTNT). Low complexity predominate over residues 549 to 563 (SSDSSYDSSSSSSNS). Residues 659 to 671 (TSASRSHSLNRAS) show a composition bias toward polar residues.

Belongs to the tubulin--tyrosine ligase family. Interacts with both alpha- and beta-tubulin (via C-terminal tubulin tails). Mg(2+) is required as a cofactor. Highly expressed in brain, testis and trachea. Expressed in brain, heart, kidney, liver, lung, muscle and trachea. In the brain, highly expressed in hippocampus, thalamus, olfactory bulb and cerebellum cortex, corpus callosum and striatum.

The protein localises to the cell projection. Its subcellular location is the cilium. It localises to the cytoplasm. It is found in the cytoskeleton. The protein resides in the cilium basal body. The protein localises to the dendrite. Its subcellular location is the perikaryon. The catalysed reaction is L-glutamyl-[protein] + L-glutamate + ATP = gamma-L-glutamyl-L-glutamyl-[protein] + ADP + phosphate + H(+). The enzyme catalyses (L-glutamyl)(n)-gamma-L-glutamyl-L-glutamyl-[protein] + L-glutamate + ATP = (L-glutamyl)(n+1)-gamma-L-glutamyl-L-glutamyl-[protein] + ADP + phosphate + H(+). Its function is as follows. Polyglutamylase which modifies tubulin, generating polyglutamate side chains of variable lengths on the gamma-carboxyl group of specific glutamate residues within the C-terminal tail of tubulin. Mediates both ATP-dependent initiation and elongation steps of the polyglutamylation reaction. Preferentially modifies the beta-tubulin tail over an alpha-tail. Competes with monoglycylase TTLL3 for modification site on beta-tubulin substrate, thereby creating an anticorrelation between glycylation and glutamylation reactions. Required for neurite growth; responsible for the strong increase in tubulin polyglutamylation during postnatal neuronal maturation. This is Tubulin polyglutamylase TTLL7 from Mus musculus (Mouse).